A 170-amino-acid chain; its full sequence is ATP synthase subunit b (170 aa).

Residues 11–31 (AFTFGDAFFTLFAFAILLVLI) traverse the membrane as a helical segment.

The protein belongs to the ATPase B chain family. F-type ATPases have 2 components, F(1) - the catalytic core - and F(0) - the membrane proton channel. F(1) has five subunits: alpha(3), beta(3), gamma(1), delta(1), epsilon(1). F(0) has three main subunits: a(1), b(2) and c(10-14). The alpha and beta chains form an alternating ring which encloses part of the gamma chain. F(1) is attached to F(0) by a central stalk formed by the gamma and epsilon chains, while a peripheral stalk is formed by the delta and b chains.

The protein localises to the cell membrane. In terms of biological role, f(1)F(0) ATP synthase produces ATP from ADP in the presence of a proton or sodium gradient. F-type ATPases consist of two structural domains, F(1) containing the extramembraneous catalytic core and F(0) containing the membrane proton channel, linked together by a central stalk and a peripheral stalk. During catalysis, ATP synthesis in the catalytic domain of F(1) is coupled via a rotary mechanism of the central stalk subunits to proton translocation. Its function is as follows. Component of the F(0) channel, it forms part of the peripheral stalk, linking F(1) to F(0). The chain is ATP synthase subunit b from Listeria innocua serovar 6a (strain ATCC BAA-680 / CLIP 11262).